A 585-amino-acid polypeptide reads, in one-letter code: Arginine--tRNA ligase (585 aa).

Positions 127–137 (PNTNKPLHVGH) match the 'HIGH' region motif.

Belongs to the class-I aminoacyl-tRNA synthetase family. In terms of assembly, monomer.

It is found in the cytoplasm. The catalysed reaction is tRNA(Arg) + L-arginine + ATP = L-arginyl-tRNA(Arg) + AMP + diphosphate. In Borrelia duttonii (strain Ly), this protein is Arginine--tRNA ligase.